The sequence spans 305 residues: Fumarylacetoacetate hydrolase domain-containing protein 2 homolog (305 aa).

A divalent metal cation is bound by residues E141, E143, and D172.

This sequence belongs to the FAH family. It depends on Ca(2+) as a cofactor. Mg(2+) serves as cofactor.

Its function is as follows. May have hydrolase activity. The sequence is that of Fumarylacetoacetate hydrolase domain-containing protein 2 homolog (fahd2) from Dictyostelium discoideum (Social amoeba).